The sequence spans 161 residues: Regulator of ribonuclease activity A (161 aa).

Belongs to the RraA family. In terms of assembly, homotrimer. Binds to both RNA-binding sites in the C-terminal region of Rne and to RhlB.

Its subcellular location is the cytoplasm. Functionally, globally modulates RNA abundance by binding to RNase E (Rne) and regulating its endonucleolytic activity. Can modulate Rne action in a substrate-dependent manner by altering the composition of the degradosome. Modulates RNA-binding and helicase activities of the degradosome. In Salmonella choleraesuis (strain SC-B67), this protein is Regulator of ribonuclease activity A.